Here is an 84-residue protein sequence, read N- to C-terminus: Envelope glycoprotein N (84 aa).

An N-terminal signal peptide occupies residues M1–A26. The Virion surface segment spans residues T27–L45. A helical transmembrane segment spans residues N46 to I66. Residues F67 to Y84 are Intravirion-facing.

This sequence belongs to the herpesviridae glycoprotein N family. Interacts (via N-terminus) with gM (via N-terminus). The gM-gN heterodimer forms the gCII complex.

It is found in the virion membrane. It localises to the host membrane. The protein localises to the host Golgi apparatus. Its subcellular location is the host trans-Golgi network. In terms of biological role, envelope glycoprotein necessary for proper maturation of gM and modulation of its membrane fusion activity. Also plays a critical role in virion morphogenesis. The sequence is that of Envelope glycoprotein N from Human herpesvirus 6B (strain Z29) (HHV-6 variant B).